The following is a 239-amino-acid chain: tRNA1(Val) (adenine(37)-N6)-methyltransferase (239 aa).

It belongs to the methyltransferase superfamily. tRNA (adenine-N(6)-)-methyltransferase family.

It is found in the cytoplasm. The enzyme catalyses adenosine(37) in tRNA1(Val) + S-adenosyl-L-methionine = N(6)-methyladenosine(37) in tRNA1(Val) + S-adenosyl-L-homocysteine + H(+). Functionally, specifically methylates the adenine in position 37 of tRNA(1)(Val) (anticodon cmo5UAC). This is tRNA1(Val) (adenine(37)-N6)-methyltransferase from Vibrio campbellii (strain ATCC BAA-1116).